Reading from the N-terminus, the 254-residue chain is Geranylgeranylglyceryl phosphate synthase (254 aa).

The Mg(2+) site is built by Asp-27 and Ser-56. Residues Tyr-174–Gly-180, Gly-212–Gly-213, and Gly-234–Thr-235 each bind sn-glycerol 1-phosphate.

It belongs to the GGGP/HepGP synthase family. Group II subfamily. As to quaternary structure, homohexamer. Mg(2+) serves as cofactor.

The protein localises to the cytoplasm. The enzyme catalyses sn-glycerol 1-phosphate + (2E,6E,10E)-geranylgeranyl diphosphate = sn-3-O-(geranylgeranyl)glycerol 1-phosphate + diphosphate. Its pathway is membrane lipid metabolism; glycerophospholipid metabolism. Its function is as follows. Prenyltransferase that catalyzes the transfer of the geranylgeranyl moiety of geranylgeranyl diphosphate (GGPP) to the C3 hydroxyl of sn-glycerol-1-phosphate (G1P). This reaction is the first ether-bond-formation step in the biosynthesis of archaeal membrane lipids. The polypeptide is Geranylgeranylglyceryl phosphate synthase (Aeropyrum pernix (strain ATCC 700893 / DSM 11879 / JCM 9820 / NBRC 100138 / K1)).